The chain runs to 380 residues: Cytochrome b (380 aa).

The next 4 membrane-spanning stretches (helical) occupy residues 34-54 (FGSL…LLAM), 78-99 (WLIR…YLHI), 114-134 (WNTG…GYVL), and 179-199 (FFAL…IHLT). Residues histidine 84 and histidine 98 each coordinate heme b. The heme b site is built by histidine 183 and histidine 197. Histidine 202 provides a ligand contact to a ubiquinone. 4 helical membrane-spanning segments follow: residues 227 to 247 (TKDI…ALFS), 289 to 309 (LGGV…PLLH), 321 to 341 (LSQL…WIGS), and 348 to 368 (FIII…ILFP).

The protein belongs to the cytochrome b family. As to quaternary structure, the cytochrome bc1 complex contains 11 subunits: 3 respiratory subunits (MT-CYB, CYC1 and UQCRFS1), 2 core proteins (UQCRC1 and UQCRC2) and 6 low-molecular weight proteins (UQCRH/QCR6, UQCRB/QCR7, UQCRQ/QCR8, UQCR10/QCR9, UQCR11/QCR10 and a cleavage product of UQCRFS1). This cytochrome bc1 complex then forms a dimer. The cofactor is heme b.

It localises to the mitochondrion inner membrane. In terms of biological role, component of the ubiquinol-cytochrome c reductase complex (complex III or cytochrome b-c1 complex) that is part of the mitochondrial respiratory chain. The b-c1 complex mediates electron transfer from ubiquinol to cytochrome c. Contributes to the generation of a proton gradient across the mitochondrial membrane that is then used for ATP synthesis. This chain is Cytochrome b (MT-CYB), found in Pygoscelis antarcticus (Chinstrap penguin).